The primary structure comprises 178 residues: Large ribosomal subunit protein bL35m (178 aa).

This sequence belongs to the bacterial ribosomal protein bL35 family.

Its subcellular location is the mitochondrion. This is Large ribosomal subunit protein bL35m (mRpL35) from Drosophila melanogaster (Fruit fly).